Consider the following 154-residue polypeptide: Myoglobin (154 aa).

The 147-residue stretch at 2–148 (GLSDGEWQLV…FRNDIAAKYK (147 aa)) folds into the Globin domain. At Ser-4 the chain carries Phosphoserine. Position 65 (His-65) interacts with nitrite. His-65 lines the O2 pocket. Thr-68 carries the post-translational modification Phosphothreonine. His-94 is a heme b binding site.

The protein belongs to the globin family. Monomeric.

The protein resides in the cytoplasm. It is found in the sarcoplasm. The enzyme catalyses Fe(III)-heme b-[protein] + nitric oxide + H2O = Fe(II)-heme b-[protein] + nitrite + 2 H(+). It carries out the reaction H2O2 + AH2 = A + 2 H2O. In terms of biological role, monomeric heme protein which primary function is to store oxygen and facilitate its diffusion within muscle tissues. Reversibly binds oxygen through a pentacoordinated heme iron and enables its timely and efficient release as needed during periods of heightened demand. Depending on the oxidative conditions of tissues and cells, and in addition to its ability to bind oxygen, it also has a nitrite reductase activity whereby it regulates the production of bioactive nitric oxide. Under stress conditions, like hypoxia and anoxia, it also protects cells against reactive oxygen species thanks to its pseudoperoxidase activity. The polypeptide is Myoglobin (MB) (Lepilemur mustelinus (Weasel sportive lemur)).